The following is a 332-amino-acid chain: Clavesin-1 (332 aa).

Positions 96-257 (IKRALMDGFP…EFGGTLPPYD (162 aa)) constitute a CRAL-TRIO domain. The segment at 300-332 (KYMKRSHSVVEPGTLRHEEERENENTQPLLALD) is disordered. Residues 313-323 (TLRHEEERENE) are compositionally biased toward basic and acidic residues.

Its subcellular location is the golgi apparatus. It is found in the trans-Golgi network membrane. The protein localises to the early endosome membrane. The protein resides in the cytoplasmic vesicle. It localises to the clathrin-coated vesicle. Its function is as follows. Required for normal morphology of late endosomes and/or lysosomes in neurons. Binds phosphatidylinositol 3,5-bisphosphate (PtdIns(3,5)P2). This is Clavesin-1 (clvs1) from Xenopus laevis (African clawed frog).